The following is a 209-amino-acid chain: dITP/XTP pyrophosphatase (209 aa).

7–12 provides a ligand contact to substrate; sequence SSHGYK. The active-site Proton acceptor is the Asp-70. Asp-70 serves as a coordination point for Mg(2+). Substrate is bound by residues Ser-71, 154–157, Lys-177, and 182–183; these read FGYD and HR.

It belongs to the HAM1 NTPase family. As to quaternary structure, homodimer. Mg(2+) is required as a cofactor.

The catalysed reaction is XTP + H2O = XMP + diphosphate + H(+). The enzyme catalyses dITP + H2O = dIMP + diphosphate + H(+). It catalyses the reaction ITP + H2O = IMP + diphosphate + H(+). Functionally, pyrophosphatase that catalyzes the hydrolysis of nucleoside triphosphates to their monophosphate derivatives, with a high preference for the non-canonical purine nucleotides XTP (xanthosine triphosphate), dITP (deoxyinosine triphosphate) and ITP. Seems to function as a house-cleaning enzyme that removes non-canonical purine nucleotides from the nucleotide pool, thus preventing their incorporation into DNA/RNA and avoiding chromosomal lesions. The polypeptide is dITP/XTP pyrophosphatase (Chlamydia muridarum (strain MoPn / Nigg)).